The primary structure comprises 448 residues: Phosphoglucosamine mutase (448 aa).

The active-site Phosphoserine intermediate is the S89. Residues S89, D232, D234, and D236 each contribute to the Mg(2+) site. A Phosphoserine modification is found at S89.

This sequence belongs to the phosphohexose mutase family. Forms large aggregates. Requires Mg(2+) as cofactor. In terms of processing, activated by phosphorylation.

It carries out the reaction alpha-D-glucosamine 1-phosphate = D-glucosamine 6-phosphate. Catalyzes the conversion of glucosamine-6-phosphate to glucosamine-1-phosphate. The sequence is that of Phosphoglucosamine mutase (glmM) from Methanocaldococcus jannaschii (strain ATCC 43067 / DSM 2661 / JAL-1 / JCM 10045 / NBRC 100440) (Methanococcus jannaschii).